A 182-amino-acid polypeptide reads, in one-letter code: Ribosome-recycling factor (182 aa).

It belongs to the RRF family.

The protein resides in the cytoplasm. Its function is as follows. Responsible for the release of ribosomes from messenger RNA at the termination of protein biosynthesis. May increase the efficiency of translation by recycling ribosomes from one round of translation to another. The chain is Ribosome-recycling factor from Picosynechococcus sp. (strain ATCC 27264 / PCC 7002 / PR-6) (Agmenellum quadruplicatum).